A 599-amino-acid chain; its full sequence is MKNIRNFSIIAHIDHGKSTLSDRIIQICGGLSDREMEAQVLDSMDLERERGITIKAQSVTLDFKASDGETYQLNFIDTPGHVDFSYEVSRSLAACEGALLVVDAGQGVEAQTLANCYTAMEMDLEVVPVLNKIDLPAADPERVAEEIEDIVGIDATDAVRCSAKTGVGVTDVLERLVRDIPPPQGDPDGPLQALIIDSWFDNYLGVVSLVRIKNGTMRKGDKIKVMSTGQTYNADRLGIFTPKQVDRTELKCGEVGWLVCAIKDILGAPVGDTLTSARNPAEKALPGFKKVKPQVYAGLFPVSSDDYESFRDALGKLSLNDASLFYEPESSSALGFGFRCGFLGLLHMEIIQERLEREYDLDLITTAPTVVYEVETTAKETIYVDSPSKLPPLNNIYELREPIAECHMLLPQAYLGNVITLCIEKRGVQTNMVYHGNQVALTYEIPMAEVVLDFFDRLKSTSRGYASLDYNFKRFQASDMVRVDVLINNERVDALALITHRDNSQSRGRELVEKMKDLIPRQQFDIAIQAAIGTHIIARSTVKQLRKNVLAKCYGGDISRKKKLLQKQKEGKKRMKRIGNVELPQEAFLAILHVGKDNR.

Positions 2 to 184 (KNIRNFSIIA…RLVRDIPPPQ (183 aa)) constitute a tr-type G domain. GTP contacts are provided by residues 14-19 (DHGKST) and 131-134 (NKID).

It belongs to the TRAFAC class translation factor GTPase superfamily. Classic translation factor GTPase family. LepA subfamily.

It is found in the cell inner membrane. The enzyme catalyses GTP + H2O = GDP + phosphate + H(+). Its function is as follows. Required for accurate and efficient protein synthesis under certain stress conditions. May act as a fidelity factor of the translation reaction, by catalyzing a one-codon backward translocation of tRNAs on improperly translocated ribosomes. Back-translocation proceeds from a post-translocation (POST) complex to a pre-translocation (PRE) complex, thus giving elongation factor G a second chance to translocate the tRNAs correctly. Binds to ribosomes in a GTP-dependent manner. This chain is Elongation factor 4, found in Salmonella gallinarum (strain 287/91 / NCTC 13346).